The following is a 208-amino-acid chain: Small ribosomal subunit protein uS4 (208 aa).

The S4 RNA-binding domain maps to 98–158; that stretch reads RRLDNVVYRL…EKNRKISVVA (61 aa).

It belongs to the universal ribosomal protein uS4 family. Part of the 30S ribosomal subunit. Contacts protein S5. The interaction surface between S4 and S5 is involved in control of translational fidelity.

Its function is as follows. One of the primary rRNA binding proteins, it binds directly to 16S rRNA where it nucleates assembly of the body of the 30S subunit. With S5 and S12 plays an important role in translational accuracy. This Lawsonia intracellularis (strain PHE/MN1-00) protein is Small ribosomal subunit protein uS4.